Here is a 427-residue protein sequence, read N- to C-terminus: BRO1 domain-containing protein BROX homolog (427 aa).

In terms of domain architecture, BRO1 spans 1–427 (MSHWFHRNPI…PSNSSGCVIA (427 aa)).

This sequence belongs to the BROX family.

This is BRO1 domain-containing protein BROX homolog from Caenorhabditis elegans.